The following is a 472-amino-acid chain: Serine/threonine-protein phosphatase T (472 aa).

TPR repeat units lie at residues 7 to 40, 41 to 73, and 74 to 107; these read ADKLKQLGNAAFSERKWHLAIDMYTKAIELTKTP, TLFCNRALAELRAELPGAALADADAALGIEPTF, and AKAYYHKASAYLSLGKHKQALTNYKKVVDLAPQN. Positions 217, 219, 246, and 278 each coordinate Mn(2+). The active-site Proton donor/acceptor is the His-279. Mn(2+)-binding residues include His-327 and His-403.

The protein belongs to the PPP phosphatase family. PP-5 (PP-T) subfamily. Mg(2+) serves as cofactor. Mn(2+) is required as a cofactor.

The protein resides in the cytoplasm. The protein localises to the cytosol. It localises to the nucleus. It carries out the reaction O-phospho-L-seryl-[protein] + H2O = L-seryl-[protein] + phosphate. The catalysed reaction is O-phospho-L-threonyl-[protein] + H2O = L-threonyl-[protein] + phosphate. Activated by arachidonic acid. Functionally, may function as a protein phosphatase. This Trypanosoma brucei brucei (strain 927/4 GUTat10.1) protein is Serine/threonine-protein phosphatase T.